Here is a 506-residue protein sequence, read N- to C-terminus: Aldehyde dehydrogenase [NAD(P)+] 2 (506 aa).

The active-site Proton acceptor is Glu268. Cys302 (nucleophile) is an active-site residue.

The protein belongs to the aldehyde dehydrogenase family.

It localises to the cytoplasm. The catalysed reaction is an aldehyde + NAD(+) + H2O = a carboxylate + NADH + 2 H(+). The enzyme catalyses 3-aminopropanal + NAD(+) + H2O = beta-alanine + NADH + 2 H(+). Its function is as follows. Cytoplasmic aldehyde dehydrogenase involved in ethanol oxidation. Involved in pantothenic acid production through the conversion of 3-aminopropanal to beta-alanine, an intermediate in pantothenic acid (vitamin B5) and coenzyme A (CoA) biosynthesis. This Saccharomyces cerevisiae (strain ATCC 204508 / S288c) (Baker's yeast) protein is Aldehyde dehydrogenase [NAD(P)+] 2 (ALD3).